The chain runs to 482 residues: Argininosuccinate synthase (482 aa).

Residues 17–25 and A43 contribute to the ATP site; that span reads AFSGGLDTS. Y99 is an L-citrulline binding site. ATP is bound by residues G129 and T131. L-aspartate is bound by residues T131, N135, and D136. N135 is a binding site for L-citrulline. An ATP-binding site is contributed by D136. L-citrulline is bound by residues R139 and S192. D194 contacts ATP. L-citrulline is bound by residues T201, E203, and E280. A disordered region spans residues 461–482; it reads SRGEATDEETMLDRAAMESGTD.

It belongs to the argininosuccinate synthase family. Type 2 subfamily. Homotetramer.

The protein resides in the cytoplasm. It carries out the reaction L-citrulline + L-aspartate + ATP = 2-(N(omega)-L-arginino)succinate + AMP + diphosphate + H(+). The protein operates within amino-acid biosynthesis; L-arginine biosynthesis; L-arginine from L-ornithine and carbamoyl phosphate: step 2/3. This Streptomyces lavendulae protein is Argininosuccinate synthase (argG).